Reading from the N-terminus, the 323-residue chain is E3 ubiquitin-protein ligase makorin (323 aa).

2 C3H1-type zinc fingers span residues methionine 1 to lysine 28 and aspartate 29 to alanine 56. A compositionally biased stretch (low complexity) spans leucine 62–serine 74. The disordered stretch occupies residues leucine 62 to lysine 92. Polar residues predominate over residues threonine 75–asparagine 87. The C3H1-type 3 zinc-finger motif lies at proline 101–leucine 128. The makorin-type Cys-His stretch occupies residues cysteine 129–histidine 158. The segment at cysteine 170–arginine 228 adopts an RING-type zinc-finger fold. Residues lysine 257 to serine 286 form a C3H1-type 4 zinc finger.

It carries out the reaction S-ubiquitinyl-[E2 ubiquitin-conjugating enzyme]-L-cysteine + [acceptor protein]-L-lysine = [E2 ubiquitin-conjugating enzyme]-L-cysteine + N(6)-ubiquitinyl-[acceptor protein]-L-lysine.. The protein operates within protein modification; protein ubiquitination. Its function is as follows. E3 ubiquitin ligase catalyzing the covalent attachment of ubiquitin moieties onto substrate proteins. The protein is E3 ubiquitin-protein ligase makorin (MKRN) of Arabidopsis thaliana (Mouse-ear cress).